A 789-amino-acid polypeptide reads, in one-letter code: Polyribonucleotide nucleotidyltransferase (789 aa).

Mg(2+) contacts are provided by Asp494 and Asp500. One can recognise a KH domain in the interval 561 to 620 (PRIESIFINKDKIRNVIGSGGKNIREICEKTGARVEIMQDGTVMIYAINNDAVEYAKNMI). The S1 motif domain occupies 630–697 (GKVFDGTVIE…DREYVQLSMR (68 aa)). Positions 709 to 789 (GELYNIRKTN…NEVPRKPRFF (81 aa)) are disordered. Basic residues predominate over residues 737–749 (SEKKRRGSGRSRR). Over residues 763-780 (NNGFGNGNRSFNDNRNGN) the composition is skewed to low complexity.

This sequence belongs to the polyribonucleotide nucleotidyltransferase family. The cofactor is Mg(2+).

The protein resides in the cytoplasm. The catalysed reaction is RNA(n+1) + phosphate = RNA(n) + a ribonucleoside 5'-diphosphate. In terms of biological role, involved in mRNA degradation. Catalyzes the phosphorolysis of single-stranded polyribonucleotides processively in the 3'- to 5'-direction. The polypeptide is Polyribonucleotide nucleotidyltransferase (Ehrlichia ruminantium (strain Gardel)).